A 401-amino-acid polypeptide reads, in one-letter code: Splicing factor 45 (401 aa).

The residue at position 2 (Ser2) is an N-acetylserine. Ser2 is modified (phosphoserine). Residue Lys15 forms a Glycyl lysine isopeptide (Lys-Gly) (interchain with G-Cter in SUMO2) linkage. Residue Lys21 is modified to N6-acetyllysine. Glycyl lysine isopeptide (Lys-Gly) (interchain with G-Cter in SUMO2) cross-links involve residues Lys24 and Lys33. Residue Lys41 is modified to N6-acetyllysine; alternate. Lys41 is covalently cross-linked (Glycyl lysine isopeptide (Lys-Gly) (interchain with G-Cter in SUMO2); alternate). Over residues Leu57–Ile68 the composition is skewed to basic and acidic residues. 2 disordered regions span residues Leu57 to Pro84 and Arg114 to Asn233. Residue Lys58 forms a Glycyl lysine isopeptide (Lys-Gly) (interchain with G-Cter in SUMO2) linkage. At Thr71 the chain carries Phosphothreonine. Basic and acidic residues predominate over residues Arg114–Pro153. Ser155 and Ser169 each carry phosphoserine. The segment covering Val182–Pro200 has biased composition (basic and acidic residues). Ser222 is subject to Phosphoserine. The 49-residue stretch at Gly235–Thr283 folds into the G-patch domain. Thr237 bears the Phosphothreonine mark. Residue Lys256 forms a Glycyl lysine isopeptide (Lys-Gly) (interchain with G-Cter in SUMO2) linkage. Ser266 is modified (phosphoserine). Lys276 participates in a covalent cross-link: Glycyl lysine isopeptide (Lys-Gly) (interchain with G-Cter in SUMO2). A phosphoserine mark is found at Ser291 and Ser293. One can recognise an RRM domain in the interval Val306–Cys385.

In terms of assembly, binds SXL. Associates with the spliceosome. Interacts with SF3B1, SF1 and U2AF2.

Its subcellular location is the nucleus. In terms of biological role, splice factor that binds to the single-stranded 3'AG at the exon/intron border and promotes its utilization in the second catalytic step. Involved in the regulation of alternative splicing and the utilization of cryptic splice sites. Promotes the utilization of a cryptic splice site created by the beta-110 mutation in the HBB gene. The resulting frameshift leads to sickle cell anemia. The polypeptide is Splicing factor 45 (RBM17) (Homo sapiens (Human)).